A 307-amino-acid chain; its full sequence is D-alanine--D-alanine ligase (307 aa).

Residues 101-301 (KTVMRAAGVS…FGELVRWMVE (201 aa)) enclose the ATP-grasp domain. 127 to 182 (PLTPPYVVKPIAEGSSMGVIIVRDERSHPPQILASDEWVYGEEVLAETYVAGRELT) provides a ligand contact to ATP. The Mg(2+) site is built by Asp-251, Glu-268, and Asn-270.

The protein belongs to the D-alanine--D-alanine ligase family. Mg(2+) serves as cofactor. Requires Mn(2+) as cofactor.

It localises to the cytoplasm. It carries out the reaction 2 D-alanine + ATP = D-alanyl-D-alanine + ADP + phosphate + H(+). The protein operates within cell wall biogenesis; peptidoglycan biosynthesis. Its function is as follows. Cell wall formation. This is D-alanine--D-alanine ligase from Methylorubrum extorquens (strain PA1) (Methylobacterium extorquens).